The sequence spans 164 residues: Protein-export protein SecB (164 aa).

A compositionally biased stretch (basic and acidic residues) spans 1–12 (MPDKDEITHDAQ). Residues 1–22 (MPDKDEITHDAQSENEESLPLA) are disordered.

This sequence belongs to the SecB family. As to quaternary structure, homotetramer, a dimer of dimers. One homotetramer interacts with 1 SecA dimer.

Its subcellular location is the cytoplasm. Functionally, one of the proteins required for the normal export of preproteins out of the cell cytoplasm. It is a molecular chaperone that binds to a subset of precursor proteins, maintaining them in a translocation-competent state. It also specifically binds to its receptor SecA. The chain is Protein-export protein SecB from Neorickettsia sennetsu (strain ATCC VR-367 / Miyayama) (Ehrlichia sennetsu).